A 731-amino-acid chain; its full sequence is 1,4-alpha-glucan branching enzyme GlgB (731 aa).

Asp-409 functions as the Nucleophile in the catalytic mechanism. Glu-462 functions as the Proton donor in the catalytic mechanism.

The protein belongs to the glycosyl hydrolase 13 family. GlgB subfamily. Monomer.

The catalysed reaction is Transfers a segment of a (1-&gt;4)-alpha-D-glucan chain to a primary hydroxy group in a similar glucan chain.. Its pathway is glycan biosynthesis; glycogen biosynthesis. In terms of biological role, catalyzes the formation of the alpha-1,6-glucosidic linkages in glycogen by scission of a 1,4-alpha-linked oligosaccharide from growing alpha-1,4-glucan chains and the subsequent attachment of the oligosaccharide to the alpha-1,6 position. This is 1,4-alpha-glucan branching enzyme GlgB from Roseobacter denitrificans (strain ATCC 33942 / OCh 114) (Erythrobacter sp. (strain OCh 114)).